The chain runs to 155 residues: Lipoprotein signal peptidase (155 aa).

Transmembrane regions (helical) follow at residues 7–27 (WFWI…YITV), 39–59 (IIPG…FSAF), 63–83 (VGWL…FAYF), and 96–116 (GFIL…GYVV). Active-site residues include aspartate 117 and aspartate 133. The chain crosses the membrane as a helical span at residues 126 to 146 (FPVFNLADVFINIGIICLLIS).

The protein belongs to the peptidase A8 family.

The protein localises to the cell inner membrane. It carries out the reaction Release of signal peptides from bacterial membrane prolipoproteins. Hydrolyzes -Xaa-Yaa-Zaa-|-(S,diacylglyceryl)Cys-, in which Xaa is hydrophobic (preferably Leu), and Yaa (Ala or Ser) and Zaa (Gly or Ala) have small, neutral side chains.. The protein operates within protein modification; lipoprotein biosynthesis (signal peptide cleavage). Its function is as follows. This protein specifically catalyzes the removal of signal peptides from prolipoproteins. This chain is Lipoprotein signal peptidase, found in Microcystis aeruginosa (strain NIES-843 / IAM M-2473).